A 202-amino-acid polypeptide reads, in one-letter code: Small ribosomal subunit protein uS5 (202 aa).

Positions Met1–Gly13 are enriched in gly residues. The interval Met1 to Lys31 is disordered. The segment covering Ser14–Ser23 has biased composition (basic and acidic residues). Residues Tyr34–Val97 enclose the S5 DRBM domain.

Belongs to the universal ribosomal protein uS5 family. Part of the 30S ribosomal subunit. Contacts proteins S4 and S8.

With S4 and S12 plays an important role in translational accuracy. Its function is as follows. Located at the back of the 30S subunit body where it stabilizes the conformation of the head with respect to the body. This Parafrankia sp. (strain EAN1pec) protein is Small ribosomal subunit protein uS5.